Reading from the N-terminus, the 400-residue chain is Subtilisin-like protease 1 (400 aa).

The N-terminal stretch at 1–20 is a signal peptide; that stretch reads MKFSQSLIALAACFLPLIAA. Positions 21–119 are excised as a propeptide; the sequence is APVEAQHAKI…IEMDGKVQAN (99 aa). Positions 42 to 117 constitute an Inhibitor I9 domain; it reads SYIVVFNKGV…AWIEMDGKVQ (76 aa). An N-linked (GlcNAc...) asparagine glycan is attached at N82. In terms of domain architecture, Peptidase S8 spans 128 to 400; it reads TWGLGRISHK…NLIAYNGNGA (273 aa). Catalysis depends on charge relay system residues D160, H192, and S345.

The protein belongs to the peptidase S8 family.

It is found in the secreted. Major secreted subtilisin-like serine endopeptidase. Mediates the degradation of collagen, the major structural protein in the mammalian host. Degrades the nonhelical regions of collagen that function in the cross-linking of the helical components. May function as virulence factor involved in epidermal wing necrosis observed in white nose syndrome (WNS) in bats. This Pseudogymnoascus destructans (strain ATCC MYA-4855 / 20631-21) (Bat white-nose syndrome fungus) protein is Subtilisin-like protease 1.